The sequence spans 485 residues: NADH-quinone oxidoreductase subunit N (485 aa).

The next 14 helical transmembrane spans lie at 8–28 (LIALLPLLIVGLTVVVVMLSI), 35–55 (FLNATLSVIGLNAALVSLWFV), 71–91 (GFAMLYTGLVLLASLATCTFA), 105–125 (FYLLVLIASLGGILLTNANHL), 127–147 (ALFLGIELISLPLFGLIGYAF), 159–179 (YTILSAAASSFLLFGMALVYA), 203–223 (LLAGFGLMIVGLGFKLSLVPF), 235–255 (PAPVSTFLATASKIAIFGVVM), 271–291 (VVLGIIAFASIIFGNLMALSQ), 297–317 (LLGYSSISHLGYLLVALIALQ), 326–346 (VGVYLAGYLFSSLGAFGVVSL), 373–393 (AAVMTVMMLSLAGIPMTLGFI), 408–430 (WWLVAAVVVGSAIGLYYYLRVAV), and 455–475 (IVVLISALLVLVLGVWPQPLI).

This sequence belongs to the complex I subunit 2 family. In terms of assembly, NDH-1 is composed of 13 different subunits. Subunits NuoA, H, J, K, L, M, N constitute the membrane sector of the complex.

The protein resides in the cell inner membrane. The enzyme catalyses a quinone + NADH + 5 H(+)(in) = a quinol + NAD(+) + 4 H(+)(out). Functionally, NDH-1 shuttles electrons from NADH, via FMN and iron-sulfur (Fe-S) centers, to quinones in the respiratory chain. The immediate electron acceptor for the enzyme in this species is believed to be ubiquinone. Couples the redox reaction to proton translocation (for every two electrons transferred, four hydrogen ions are translocated across the cytoplasmic membrane), and thus conserves the redox energy in a proton gradient. The protein is NADH-quinone oxidoreductase subunit N of Salmonella dublin (strain CT_02021853).